A 230-amino-acid chain; its full sequence is 7-cyano-7-deazaguanine synthase (230 aa).

Ile-9–Leu-19 provides a ligand contact to ATP. Zn(2+) is bound by residues Cys-192, Cys-202, Cys-205, and Cys-208.

It belongs to the QueC family. Requires Zn(2+) as cofactor.

It catalyses the reaction 7-carboxy-7-deazaguanine + NH4(+) + ATP = 7-cyano-7-deazaguanine + ADP + phosphate + H2O + H(+). It participates in purine metabolism; 7-cyano-7-deazaguanine biosynthesis. Functionally, catalyzes the ATP-dependent conversion of 7-carboxy-7-deazaguanine (CDG) to 7-cyano-7-deazaguanine (preQ(0)). This Myxococcus xanthus (strain DK1622) protein is 7-cyano-7-deazaguanine synthase.